The chain runs to 421 residues: MRVLVLGGGVVGVTSAYYLARAGHEVTVLDRQPGAGLETSFANAGQVSPGYSAPWAAPGIPLKAMKWLMMRHRPLVLWPQLEPRLYGWLARMLANCTQEAYQRNKGRMVRLAEFSRDALRDLRGETGIAYDHREKGTLQLFRTRKQLDHVGDDTRVLDAYGVAYEVLDPEGCIAAEPALARVRDTFVGGLRLPGDETGDAHLFTQRLAALCADRGVRFRFGVAVARLHHEAGRVTGVETATGEVLRAEAYVAAMGSYTPALLRPLGLSLPVYPVKGYSLTLPVTDEGSAPVSTVMDETYKVAITRLGDRIRVGGTAELAGFSQALRGPRRATLERSLTDLFPAGGDLSRATFWTGLRPMTPDGTPIVGATAYGNLYTNTGHGTLGWTMACGSGRMLADLITGRHPEIAHEDFAERRYRRAA.

3–17 (VLVLGGGVVGVTSAY) is a binding site for FAD.

Belongs to the DadA oxidoreductase family. Requires FAD as cofactor.

It catalyses the reaction a D-alpha-amino acid + A + H2O = a 2-oxocarboxylate + AH2 + NH4(+). Its pathway is amino-acid degradation; D-alanine degradation; NH(3) and pyruvate from D-alanine: step 1/1. Oxidative deamination of D-amino acids. The protein is D-amino acid dehydrogenase of Methylobacterium sp. (strain 4-46).